Reading from the N-terminus, the 226-residue chain is MNENLFAPFITPTVLGISVLPLIMIFPCLLFSTSNRWVPNRLIALQLWLVRLITKQMMMMHNKQGRMWTLMLITLIIFIASTNLLGLLPYTFTPTTQLSMNMGMAIPLWMGTVLMGFRNKPKASLAHFLPQGTPTPLIPMLIIIETISLFIQPLALAVRLTANITAGHLLIHLIGSATLALSSISLTVSTITFTILFLLTILEFAVALIQAYVFTLLVSLYLHDNT.

6 consecutive transmembrane segments (helical) span residues phenylalanine 6 to phenylalanine 26, tryptophan 68 to leucine 88, glutamine 97 to phenylalanine 117, isoleucine 138 to valine 158, isoleucine 164 to isoleucine 184, and phenylalanine 193 to valine 213.

Belongs to the ATPase A chain family. In terms of assembly, component of the ATP synthase complex composed at least of ATP5F1A/subunit alpha, ATP5F1B/subunit beta, ATP5MC1/subunit c (homooctomer), MT-ATP6/subunit a, MT-ATP8/subunit 8, ATP5ME/subunit e, ATP5MF/subunit f, ATP5MG/subunit g, ATP5MK/subunit k, ATP5MJ/subunit j, ATP5F1C/subunit gamma, ATP5F1D/subunit delta, ATP5F1E/subunit epsilon, ATP5PF/subunit F6, ATP5PB/subunit b, ATP5PD/subunit d, ATP5PO/subunit OSCP. ATP synthase complex consists of a soluble F(1) head domain (subunits alpha(3) and beta(3)) - the catalytic core - and a membrane F(0) domain - the membrane proton channel (subunits c, a, 8, e, f, g, k and j). These two domains are linked by a central stalk (subunits gamma, delta, and epsilon) rotating inside the F1 region and a stationary peripheral stalk (subunits F6, b, d, and OSCP). Interacts with DNAJC30; interaction is direct.

The protein localises to the mitochondrion inner membrane. The catalysed reaction is H(+)(in) = H(+)(out). Functionally, subunit a, of the mitochondrial membrane ATP synthase complex (F(1)F(0) ATP synthase or Complex V) that produces ATP from ADP in the presence of a proton gradient across the membrane which is generated by electron transport complexes of the respiratory chain. ATP synthase complex consist of a soluble F(1) head domain - the catalytic core - and a membrane F(1) domain - the membrane proton channel. These two domains are linked by a central stalk rotating inside the F(1) region and a stationary peripheral stalk. During catalysis, ATP synthesis in the catalytic domain of F(1) is coupled via a rotary mechanism of the central stalk subunits to proton translocation. With the subunit c (ATP5MC1), forms the proton-conducting channel in the F(0) domain, that contains two crucial half-channels (inlet and outlet) that facilitate proton movement from the mitochondrial intermembrane space (IMS) into the matrix. Protons are taken up via the inlet half-channel and released through the outlet half-channel, following a Grotthuss mechanism. The protein is ATP synthase F(0) complex subunit a of Ornithorhynchus anatinus (Duckbill platypus).